The primary structure comprises 99 residues: U1-theraphotoxin-Lsp1c (99 aa).

The signal sequence occupies residues 1–23; it reads MRKITIRALLLCSLLLVFHTSAA. A propeptide spanning residues 24–50 is cleaved from the precursor; sequence AELQAQEGHLMIPGDTDTALETVDDER. Intrachain disulfides connect Cys-54-Cys-67, Cys-58-Cys-91, Cys-72-Cys-74, and Cys-85-Cys-96.

The protein belongs to the neurotoxin 12 (Hwtx-2) family. 04 (lasiotoxin) subfamily. Expressed by the venom gland.

It localises to the secreted. Functionally, toxin that causes irreversible contractile paralysis into adult Aedes aegypti resulting in 100% mortality after 24 hours. This chain is U1-theraphotoxin-Lsp1c, found in Lasiodora sp. (strain IBSP 8539) (Brazilian salmon pink birdeater).